Consider the following 417-residue polypeptide: Sterile alpha motif domain-containing protein 14 (417 aa).

The interval 37-306 (LLVKGRRHRP…QETKCSYPYH (270 aa)) is disordered. Residues 40 to 49 (KGRRHRPSRS) show a composition bias toward basic residues. Residues S84 and S108 each carry the phosphoserine modification. Low complexity predominate over residues 138–153 (SGSPPRSAPSSDSSPS). Residues 159–173 (PRAEPHSEDDSRDAS) are compositionally biased toward basic and acidic residues. 2 positions are modified to phosphoserine: S173 and S179. Composition is skewed to low complexity over residues 244 to 260 (SGKG…PTCS) and 276 to 289 (STLS…SSSP). S279 carries the post-translational modification Phosphoserine. T283 is modified (phosphothreonine). The region spanning 326 to 389 (WTSQQVGQWL…KRKLKELAAA (64 aa)) is the SAM domain. The stretch at 375 to 416 (DRALVKRKLKELAAAAEKERKAQEKTARQREKLRRREHEAKK) forms a coiled coil. The interval 390–417 (AEKERKAQEKTARQREKLRRREHEAKKS) is disordered.

The sequence is that of Sterile alpha motif domain-containing protein 14 (Samd14) from Rattus norvegicus (Rat).